Reading from the N-terminus, the 241-residue chain is Ras-like protein 1 (241 aa).

Residues 17-22, 33-39, 63-64, 138-141, and 168-170 each bind GTP; these read GVGKTA, VETYDPT, AG, NKSD, and SAK. An Effector region motif is present at residues 36 to 44; sequence YDPTIEDSY. Residues 190–241 form a disordered region; sequence RQQASRPSLPGNSRTKTGGMGKSESFYQSDGKRGSRKDGEKHRSKPIKCVIL. The segment covering 191-205 has biased composition (polar residues); that stretch reads QQASRPSLPGNSRTK. A compositionally biased stretch (basic and acidic residues) spans 219-230; that stretch reads DGKRGSRKDGEK. Cys238 is subject to Cysteine methyl ester. Cys238 carries the S-farnesyl cysteine lipid modification. Positions 239-241 are cleaved as a propeptide — removed in mature form; sequence VIL.

This sequence belongs to the small GTPase superfamily. Ras family. Interacts with farnesyltransferase beta subunit RAM1.

The protein resides in the cell membrane. Its activity is regulated as follows. Alternates between an inactive form bound to GDP and an active form bound to GTP. Activated by a guanine nucleotide-exchange factor (GEF) and inactivated by a GTPase-activating protein (GAP). Modulates the activity of the adenylate cyclase catalytic subunit and therefore affects the biosynthesis of cyclic-AMP. Plays a role in both surface attachment and surface recognition of appressoria, a highly specialized infection structure for plant penetration. Regulates appressorium formation by coordinated regulation of cAMP signaling and Pmk1 MAPK pathways. This is Ras-like protein 1 from Pyricularia oryzae (strain 70-15 / ATCC MYA-4617 / FGSC 8958) (Rice blast fungus).